Consider the following 436-residue polypeptide: Protein disulfide-isomerase (436 aa).

The Thioredoxin domain occupies 216-365; it reads FLAGKIDPSI…VEDATESAKA (150 aa). Residues cysteine 266 and cysteine 269 each act as nucleophile in the active site. A disulfide bond links cysteine 266 and cysteine 269. The segment at 328–436 is disordered; sequence TLVPHCRGSR…ASASSVKDEL (109 aa). Positions 334 to 343 are enriched in basic residues; that stretch reads RGSRPVHRRE. 2 stretches are compositionally biased toward low complexity: residues 362 to 377 and 385 to 436; these read SAKASASSATDSAASA and VKSG…KDEL. The Prevents secretion from ER signature appears at 433 to 436; the sequence is KDEL.

It belongs to the protein disulfide isomerase family.

Its subcellular location is the endoplasmic reticulum lumen. The enzyme catalyses Catalyzes the rearrangement of -S-S- bonds in proteins.. Participates in the folding of proteins containing disulfide bonds, may be involved in glycosylation, prolyl hydroxylation and triglyceride transfer. The chain is Protein disulfide-isomerase from Alternaria alternata (Alternaria rot fungus).